The following is a 262-amino-acid chain: Autophagy-related protein 27 (262 aa).

Residues 1 to 20 (MLKMRLLLTWVLLVLPLVNA) form the signal peptide. The MRH domain maps to 21-170 (LKCANNRVLR…IIKGPSGCKK (150 aa)). Topologically, residues 21 to 185 (LKCANNRVLR…EDGDVEESSG (165 aa)) are lumenal. Cystine bridges form between cysteine 23–cysteine 61, cysteine 73–cysteine 80, and cysteine 139–cysteine 168. The chain crosses the membrane as a helical span at residues 186–206 (LSWFTWLFIYAIFFTVVYLVV). Residues 207 to 262 (TSYTQTRGGSIDDFRHDFVERAKQFFTSLPAFVREVVSKVLGSAPNAAERGGYSAV) lie on the Cytoplasmic side of the membrane.

The protein belongs to the ATG27 family.

It is found in the cytoplasmic vesicle membrane. The protein resides in the golgi apparatus membrane. Its subcellular location is the mitochondrion membrane. In terms of biological role, regulates the cytoplasm to vacuole transport (Cvt) vesicle formation. This chain is Autophagy-related protein 27 (ATG27), found in Vanderwaltozyma polyspora (strain ATCC 22028 / DSM 70294 / BCRC 21397 / CBS 2163 / NBRC 10782 / NRRL Y-8283 / UCD 57-17) (Kluyveromyces polysporus).